Reading from the N-terminus, the 285-residue chain is Meiotically up-regulated gene 125 protein (285 aa).

Its subcellular location is the cytoplasm. It localises to the nucleus. Functionally, has a role in meiosis. This chain is Meiotically up-regulated gene 125 protein (mug125), found in Schizosaccharomyces pombe (strain 972 / ATCC 24843) (Fission yeast).